The primary structure comprises 178 residues: Large ribosomal subunit protein uL6 (178 aa).

It belongs to the universal ribosomal protein uL6 family. In terms of assembly, part of the 50S ribosomal subunit.

Its function is as follows. This protein binds to the 23S rRNA, and is important in its secondary structure. It is located near the subunit interface in the base of the L7/L12 stalk, and near the tRNA binding site of the peptidyltransferase center. In Lactococcus lactis subsp. lactis (strain IL1403) (Streptococcus lactis), this protein is Large ribosomal subunit protein uL6.